A 388-amino-acid chain; its full sequence is Chorismate synthase (388 aa).

Positions 39 and 45 each coordinate NADP(+). Residues 130–132 (RSS), 251–252 (NA), Gly296, 311–315 (KPIPT), and Arg337 each bind FMN.

It belongs to the chorismate synthase family. In terms of assembly, homotetramer. FMNH2 is required as a cofactor.

It catalyses the reaction 5-O-(1-carboxyvinyl)-3-phosphoshikimate = chorismate + phosphate. The protein operates within metabolic intermediate biosynthesis; chorismate biosynthesis; chorismate from D-erythrose 4-phosphate and phosphoenolpyruvate: step 7/7. Functionally, catalyzes the anti-1,4-elimination of the C-3 phosphate and the C-6 proR hydrogen from 5-enolpyruvylshikimate-3-phosphate (EPSP) to yield chorismate, which is the branch point compound that serves as the starting substrate for the three terminal pathways of aromatic amino acid biosynthesis. This reaction introduces a second double bond into the aromatic ring system. The protein is Chorismate synthase of Streptococcus sanguinis (strain SK36).